The sequence spans 368 residues: Chaperone protein DnaJ (368 aa).

Residues 5-69 (DYYEVLGLSQ…QKRAQYDQFG (65 aa)) form the J domain. The segment at 130–212 (GKELNVEIPV…CHGSGKVRKR (83 aa)) adopts a CR-type zinc-finger fold. Zn(2+) contacts are provided by Cys-143, Cys-146, Cys-160, Cys-163, Cys-186, Cys-189, Cys-200, and Cys-203. CXXCXGXG motif repeat units follow at residues 143 to 150 (CDTCKGSG), 160 to 167 (CKHCSGSG), 186 to 193 (CGHCSGTG), and 200 to 207 (CTTCHGSG).

It belongs to the DnaJ family. As to quaternary structure, homodimer. Zn(2+) serves as cofactor.

It localises to the cytoplasm. Its function is as follows. Participates actively in the response to hyperosmotic and heat shock by preventing the aggregation of stress-denatured proteins and by disaggregating proteins, also in an autonomous, DnaK-independent fashion. Unfolded proteins bind initially to DnaJ; upon interaction with the DnaJ-bound protein, DnaK hydrolyzes its bound ATP, resulting in the formation of a stable complex. GrpE releases ADP from DnaK; ATP binding to DnaK triggers the release of the substrate protein, thus completing the reaction cycle. Several rounds of ATP-dependent interactions between DnaJ, DnaK and GrpE are required for fully efficient folding. Also involved, together with DnaK and GrpE, in the DNA replication of plasmids through activation of initiation proteins. In Bacillus mycoides (strain KBAB4) (Bacillus weihenstephanensis), this protein is Chaperone protein DnaJ.